Reading from the N-terminus, the 144-residue chain is Large ribosomal subunit protein uL15 (144 aa).

The interval 1-48 (MRLNTLSPAAGSKSAAKRVGRGIGSGTGKTCGRGHKGQKSRSGGGVRI) is disordered. Residues 21-31 (RGIGSGTGKTC) show a composition bias toward gly residues.

The protein belongs to the universal ribosomal protein uL15 family. In terms of assembly, part of the 50S ribosomal subunit.

Its function is as follows. Binds to the 23S rRNA. This chain is Large ribosomal subunit protein uL15, found in Shewanella woodyi (strain ATCC 51908 / MS32).